A 724-amino-acid chain; its full sequence is Phenylalanine ammonia-lyase (724 aa).

The active-site Proton donor/acceptor is Y99. A cross-link (5-imidazolinone (Ala-Gly)) is located at residues 204–206 (ASG). S205 is subject to 2,3-didehydroalanine (Ser). The (E)-cinnamate site is built by N265, Q355, R361, N391, K462, E490, and N493.

This sequence belongs to the PAL/histidase family. As to quaternary structure, homotetramer. Post-translationally, contains an active site 4-methylidene-imidazol-5-one (MIO), which is formed autocatalytically by cyclization and dehydration of residues Ala-Ser-Gly.

The protein resides in the cytoplasm. It catalyses the reaction L-phenylalanine = (E)-cinnamate + NH4(+). Its pathway is phenylpropanoid metabolism; trans-cinnamate biosynthesis; trans-cinnamate from L-phenylalanine: step 1/1. In terms of biological role, catalyzes the non-oxidative deamination of L-phenylalanine to form trans-cinnamic acid and a free ammonium ion. Facilitates the commitment step in phenylpropanoid pathways that produce secondary metabolites such as lignins, coumarins and flavonoids. This Flammulina velutipes (Agaricus velutipes) protein is Phenylalanine ammonia-lyase.